Here is a 374-residue protein sequence, read N- to C-terminus: MVSLNTNVAAMMTQRHLSQAADQNVESQRNLSSGYRINSASDDAAGLQISNTLHVQTRGIDVALRNAHDAYSVAQTAEGALHESSDILQRLRSLGLQAANGSHEQDDRKSLQQEVIALQDELDRVAITTTFADKNLFNGSYGSQSFHIGANANSISLALRNMRTHIPEMGGQHYLGDSLDKDWRVTRDNQQFAFEYQDNEGQAQSKVLTLKVGDNLEEVATYINAQQSVVDASVTQDHQLQFFTSTLNAPEGITWKGNFADEMDIGSGELVTVDDLDMSTVGGAQLAIGVVDAAIKYVDSHRSEIGGFQNRVSGTIDNLNTINRSVSESKGRIRDTDFARESTVMVRSQVLQDATTALLAQAKQRPSSALGLLS.

The stretch at 102–126 forms a coiled coil; it reads SHEQDDRKSLQQEVIALQDELDRVA.

Belongs to the bacterial flagellin family. Heteromer of multiple flagellin subunits including FlaA, FlaB/D, FlaC, FlaE and FlaF.

The protein localises to the secreted. It localises to the bacterial flagellum. Its function is as follows. Flagellin is the subunit protein which polymerizes to form the filaments of bacterial flagella. The chain is Polar flagellin E (flaE) from Vibrio parahaemolyticus serotype O3:K6 (strain RIMD 2210633).